The following is a 481-amino-acid chain: Sucrose phosphorylase (481 aa).

Sucrose-binding positions include Asp49, His87, 191-193 (RLD), Glu234, 291-292 (HD), 335-338 (DIYQ), and Arg392. Residue Asp193 is the Nucleophile of the active site. Glu234 acts as the Proton donor in catalysis.

The protein belongs to the glycosyl hydrolase 13 family. Sucrose phosphorylase subfamily.

The protein resides in the cytoplasm. The enzyme catalyses sucrose + phosphate = D-fructose + alpha-D-glucose 1-phosphate. Its function is as follows. Intracellular catabolism of sucrose. Being intracellular, probably not involved in synthesis of extracellular polysaccharides. The sequence is that of Sucrose phosphorylase from Streptococcus mutans serotype c (strain ATCC 700610 / UA159).